A 245-amino-acid polypeptide reads, in one-letter code: Thiopurine S-methyltransferase (245 aa).

29–40 contacts S-adenosyl-L-methionine; the sequence is WREKWVDGKIGF. Phenylalanine 40 is a binding site for substrate. N6-acetyllysine is present on lysine 58. Residues leucine 69, glutamate 90, and arginine 152 each coordinate S-adenosyl-L-methionine.

This sequence belongs to the class I-like SAM-binding methyltransferase superfamily. TPMT family. Monomer.

It localises to the cytoplasm. It carries out the reaction S-adenosyl-L-methionine + a thiopurine = S-adenosyl-L-homocysteine + a thiopurine S-methylether.. The polypeptide is Thiopurine S-methyltransferase (TPMT) (Panthera pardus (Leopard)).